The primary structure comprises 349 residues: MKEVYLVGYARGASGQSDEPPGSMDHQASVQRLSGEYFSLGNPSDGEALYETAAGENTLSEHTSGEHTSVEHASAEHSSTEHTSGEHASGEHTSGERATGEHTSSEHATSEHTSGEQPSGEQPSGEKSSGEQPSGEKSSGEQPSGEKSLGEQPSGEQSSGEKSSAEQTSGEQAVAEKPSGEHAVAEKPSGEQAVAERPSGEQAVAEKPLGEQAVAERPSGEQASIEKASSEQASAEQASAEQASSEQASGEKPLGEQPSGIPPSSTFSGPILNCHTCSYMNDQGKCLRGEGVCSTQNSQQCMLKKIFEGGKLQFMVQGCENMCPSMNLFSHGTRMQIICCRNQSFCNKI.

Positions 1-8 (MKEVYLVG) are cleaved as a signal peptide. Residues 1–265 (MKEVYLVGYA…EQPSGIPPSS (265 aa)) are disordered. Residues 63–114 (TSGEHTSVEHASAEHSSTEHTSGEHASGEHTSGERATGEHTSSEHATSEHTS) show a composition bias toward basic and acidic residues. Polar residues-rich tracts occupy residues 117-142 (QPSG…SGEQ) and 154-171 (SGEQ…TSGE). Residues 178–189 (PSGEHAVAEKPS) are compositionally biased toward basic and acidic residues. The span at 221 to 248 (EQASIEKASSEQASAEQASAEQASSEQA) shows a compositional bias: low complexity. Residue Asn-342 is glycosylated (N-linked (GlcNAc...) asparagine).

It to acrosomal proteins SP-10. In terms of tissue distribution, testis.

The protein localises to the cytoplasmic vesicle. The protein resides in the secretory vesicle. Its subcellular location is the acrosome. This chain is Sperm acrosomal protein FSA-ACR.1, found in Vulpes vulpes (Red fox).